The sequence spans 141 residues: MSNITIYHNPACGTSRNTLEMIRNSGTEPTIIHYLETPPTRDELVKLIADMGISVRALLRKNVEPYEELGLAEDKFTDDRLIDFMLQHPILINRPIVVTPLGTRLCRPSEVVLEILPDAQKGAFSKEDGEKVVDEAGKRLK.

Catalysis depends on cysteine 12, which acts as the Nucleophile; cysteine thioarsenate intermediate.

This sequence belongs to the ArsC family.

The enzyme catalyses [glutaredoxin]-dithiol + arsenate + glutathione + H(+) = glutathionyl-S-S-[glutaredoxin] + arsenite + H2O. Its function is as follows. Involved in resistance to arsenate. Catalyzes the reduction of arsenate [As(V)] to arsenite [As(III)]. This is Arsenate reductase from Escherichia coli (strain K12).